The following is a 164-amino-acid chain: Transcription elongation factor GreA (164 aa).

A coiled-coil region spans residues 12–38 (RRLERELERLKKERPGVILAIKEAREE).

It belongs to the GreA/GreB family.

Functionally, necessary for efficient RNA polymerase transcription elongation past template-encoded arresting sites. The arresting sites in DNA have the property of trapping a certain fraction of elongating RNA polymerases that pass through, resulting in locked ternary complexes. Cleavage of the nascent transcript by cleavage factors such as GreA or GreB allows the resumption of elongation from the new 3'terminus. GreA releases sequences of 2 to 3 nucleotides. The chain is Transcription elongation factor GreA from Solidesulfovibrio magneticus (strain ATCC 700980 / DSM 13731 / RS-1) (Desulfovibrio magneticus).